The chain runs to 544 residues: Chaperonin GroEL (544 aa).

ATP contacts are provided by residues 29 to 32 (TLGP), 86 to 90 (DGTTT), glycine 413, 476 to 478 (NAA), and aspartate 492.

This sequence belongs to the chaperonin (HSP60) family. As to quaternary structure, forms a cylinder of 14 subunits composed of two heptameric rings stacked back-to-back. Interacts with the co-chaperonin GroES.

The protein resides in the cytoplasm. It catalyses the reaction ATP + H2O + a folded polypeptide = ADP + phosphate + an unfolded polypeptide.. Functionally, together with its co-chaperonin GroES, plays an essential role in assisting protein folding. The GroEL-GroES system forms a nano-cage that allows encapsulation of the non-native substrate proteins and provides a physical environment optimized to promote and accelerate protein folding. The protein is Chaperonin GroEL of Bacillus thuringiensis (strain Al Hakam).